Consider the following 378-residue polypeptide: MPLPSFLEVYEGLISTSSISSTDARWDEGNEQVIAKLADWLSALGFSIQIEQVAPNKQNLIAKLGSGEGGLLLAGHSDTVPFDEGRWNYNPHALTQVNNRFYGLGTADMKGFFAFIYEAVKNVDWSKQTKPLYVLATCDEETTMLGARHFTENAPFKPDYCIIGEPTSLVPIRAHKGHVANAIRVTGKSGHSSNPALGVNAIEIMHEVLFALMQLRDRLIKEYHHPGFEIPTPTLNLGHIHGGDSPNRICGCCELHYDVRPLPGISLDGLDNLMHDALREVQQKWPGRIELVPLHDPIPGYECAHDHPFIHGISEICEQEAQTVNYCTEAPFLQQVCPTLVLGPGSIDQAHQPDEFLAFEFIDPTVRVLSRAMQKYCF.

His76 serves as a coordination point for Zn(2+). Residue Asp78 is part of the active site. Asp108 provides a ligand contact to Zn(2+). Glu140 is an active-site residue. Zn(2+)-binding residues include Glu141, Glu165, and His351.

It belongs to the peptidase M20A family. ArgE subfamily. In terms of assembly, homodimer. Requires Zn(2+) as cofactor. It depends on Co(2+) as a cofactor. The cofactor is glutathione.

The protein resides in the cytoplasm. The enzyme catalyses N(2)-acetyl-L-ornithine + H2O = L-ornithine + acetate. The protein operates within amino-acid biosynthesis; L-arginine biosynthesis; L-ornithine from N(2)-acetyl-L-ornithine (linear): step 1/1. In terms of biological role, catalyzes the hydrolysis of the amide bond of N(2)-acetylated L-amino acids. Cleaves the acetyl group from N-acetyl-L-ornithine to form L-ornithine, an intermediate in L-arginine biosynthesis pathway, and a branchpoint in the synthesis of polyamines. In Vibrio cholerae serotype O1 (strain ATCC 39541 / Classical Ogawa 395 / O395), this protein is Acetylornithine deacetylase.